Reading from the N-terminus, the 332-residue chain is Ornithine carbamoyltransferase, catabolic (332 aa).

Residues 60-63 (STRT), Gln-87, Arg-111, and 138-141 (HPTQ) contribute to the carbamoyl phosphate site. Residues Asn-170, Asp-230, and 234 to 235 (SM) contribute to the L-ornithine site. Residues 271-272 (CL) and Arg-316 contribute to the carbamoyl phosphate site.

It belongs to the aspartate/ornithine carbamoyltransferase superfamily. OTCase family.

The protein localises to the cytoplasm. The enzyme catalyses carbamoyl phosphate + L-ornithine = L-citrulline + phosphate + H(+). It functions in the pathway amino-acid degradation; L-arginine degradation via ADI pathway; carbamoyl phosphate from L-arginine: step 2/2. Reversibly catalyzes the transfer of the carbamoyl group from carbamoyl phosphate (CP) to the N(epsilon) atom of ornithine (ORN) to produce L-citrulline. The polypeptide is Ornithine carbamoyltransferase, catabolic (Bacillus thuringiensis subsp. konkukian (strain 97-27)).